We begin with the raw amino-acid sequence, 358 residues long: Glutamine synthetase (358 aa).

In terms of domain architecture, GS beta-grasp spans 26-105 (ILAEYIWIDG…VLAECWNADG (80 aa)). The GS catalytic domain maps to 112-358 (HRHECAKIME…IMMETICGGI (247 aa)).

Belongs to the glutamine synthetase family. As to quaternary structure, homooctamer.

The protein resides in the cytoplasm. The catalysed reaction is L-glutamate + NH4(+) + ATP = L-glutamine + ADP + phosphate + H(+). The protein is Glutamine synthetase (GLN1) of Tuber borchii (White truffle).